The sequence spans 351 residues: Porphobilinogen deaminase (351 aa).

At Cys-242 the chain carries S-(dipyrrolylmethanemethyl)cysteine. The RPE1 insert domain occupies 257–306; the sequence is PRHLSKLAYREVLEGNTEALATAAYKSNRTDASTGLTYKLPLEVEFGKVS.

Belongs to the HMBS family. In terms of assembly, monomer. It depends on dipyrromethane as a cofactor.

It carries out the reaction 4 porphobilinogen + H2O = hydroxymethylbilane + 4 NH4(+). Its pathway is porphyrin-containing compound metabolism; protoporphyrin-IX biosynthesis; coproporphyrinogen-III from 5-aminolevulinate: step 2/4. Its function is as follows. Tetrapolymerization of the monopyrrole PBG into the hydroxymethylbilane pre-uroporphyrinogen in several discrete steps. The protein is Porphobilinogen deaminase of Rickettsia conorii (strain ATCC VR-613 / Malish 7).